A 496-amino-acid chain; its full sequence is Ammonium transporter 1 member 2 (496 aa).

11 helical membrane-spanning segments follow: residues 39-59 (LLFS…LCAG), 74-94 (VLDA…FAFG), 120-140 (FFLF…GSIA), 148-168 (YLIY…HWIW), 192-212 (FAGS…GALI), 236-256 (LVVL…PGSF), 274-296 (SAVG…TTLF), 307-327 (VIDV…GCSV), 331-351 (WAAI…NALA), 360-380 (LEAA…TALF), and 412-432 (IVVI…LFLV).

The protein belongs to the ammonia transporter channel (TC 1.A.11.2) family. In terms of tissue distribution, expressed in exodermis, sclerenchyma, endodermis and pericycle cells of primary root tips.

Its subcellular location is the membrane. In terms of biological role, ammonium transporter probably involved in ammonium uptake from the soil and ammonium uptake and retrieval in the vascular system. In Oryza sativa subsp. japonica (Rice), this protein is Ammonium transporter 1 member 2 (AMT1-2).